Reading from the N-terminus, the 491-residue chain is Ketol-acid reductoisomerase (NADP(+)) (491 aa).

Positions 15–208 (AQLGKCRFMG…GGHRAGVLES (194 aa)) constitute a KARI N-terminal Rossmann domain. NADP(+)-binding positions include 45–48 (CGAQ), Arg68, Arg76, Ser78, and 108–110 (DKQ). His132 is a catalytic residue. Gly158 serves as a coordination point for NADP(+). KARI C-terminal knotted domains follow at residues 209-344 (SFVA…TAPQ) and 345-484 (YEGK…MTDM). Residues Asp217, Glu221, Glu389, and Glu393 each coordinate Mg(2+). A substrate-binding site is contributed by Ser414.

This sequence belongs to the ketol-acid reductoisomerase family. Mg(2+) serves as cofactor.

The enzyme catalyses (2R)-2,3-dihydroxy-3-methylbutanoate + NADP(+) = (2S)-2-acetolactate + NADPH + H(+). It catalyses the reaction (2R,3R)-2,3-dihydroxy-3-methylpentanoate + NADP(+) = (S)-2-ethyl-2-hydroxy-3-oxobutanoate + NADPH + H(+). Its pathway is amino-acid biosynthesis; L-isoleucine biosynthesis; L-isoleucine from 2-oxobutanoate: step 2/4. It functions in the pathway amino-acid biosynthesis; L-valine biosynthesis; L-valine from pyruvate: step 2/4. In terms of biological role, involved in the biosynthesis of branched-chain amino acids (BCAA). Catalyzes an alkyl-migration followed by a ketol-acid reduction of (S)-2-acetolactate (S2AL) to yield (R)-2,3-dihydroxy-isovalerate. In the isomerase reaction, S2AL is rearranged via a Mg-dependent methyl migration to produce 3-hydroxy-3-methyl-2-ketobutyrate (HMKB). In the reductase reaction, this 2-ketoacid undergoes a metal-dependent reduction by NADPH to yield (R)-2,3-dihydroxy-isovalerate. In Escherichia coli O6:K15:H31 (strain 536 / UPEC), this protein is Ketol-acid reductoisomerase (NADP(+)).